Consider the following 322-residue polypeptide: Mitochondrial thiamine pyrophosphate carrier 1 (322 aa).

Solcar repeat units follow at residues 12–111, 122–208, and 215–310; these read GSKT…VTLG, PAAA…LRLP, and PFGS…VLGI. The next 6 helical transmembrane spans lie at 18–38, 92–108, 128–148, 180–200, 221–241, and 285–302; these read MIAG…LDVV, LMYV…YRSV, FIAG…LDLL, FFQG…IFFA, ASAG…FDLI, and GLTV…VTMW.

It belongs to the mitochondrial carrier (TC 2.A.29) family.

It localises to the mitochondrion inner membrane. Its function is as follows. Mitochondrial transporter that mediates uptake of thiamine pyrophosphate (ThPP) into mitochondria. This is Mitochondrial thiamine pyrophosphate carrier 1 (tpc1) from Botryotinia fuckeliana (strain B05.10) (Noble rot fungus).